The primary structure comprises 356 residues: tRNA N6-adenosine threonylcarbamoyltransferase (356 aa).

Fe cation-binding residues include His115 and His119. Substrate contacts are provided by residues 138-142, Asp171, Gly184, and Asn283; that span reads LVSGG. Asp311 contacts Fe cation.

The protein belongs to the KAE1 / TsaD family. Requires Fe(2+) as cofactor.

The protein resides in the cytoplasm. It carries out the reaction L-threonylcarbamoyladenylate + adenosine(37) in tRNA = N(6)-L-threonylcarbamoyladenosine(37) in tRNA + AMP + H(+). In terms of biological role, required for the formation of a threonylcarbamoyl group on adenosine at position 37 (t(6)A37) in tRNAs that read codons beginning with adenine. Is involved in the transfer of the threonylcarbamoyl moiety of threonylcarbamoyl-AMP (TC-AMP) to the N6 group of A37, together with TsaE and TsaB. TsaD likely plays a direct catalytic role in this reaction. The protein is tRNA N6-adenosine threonylcarbamoyltransferase of Prochlorococcus marinus (strain AS9601).